The sequence spans 88 residues: Exodeoxyribonuclease 7 small subunit (88 aa).

This sequence belongs to the XseB family. Heterooligomer composed of large and small subunits.

Its subcellular location is the cytoplasm. It carries out the reaction Exonucleolytic cleavage in either 5'- to 3'- or 3'- to 5'-direction to yield nucleoside 5'-phosphates.. Functionally, bidirectionally degrades single-stranded DNA into large acid-insoluble oligonucleotides, which are then degraded further into small acid-soluble oligonucleotides. This is Exodeoxyribonuclease 7 small subunit from Tolumonas auensis (strain DSM 9187 / NBRC 110442 / TA 4).